A 527-amino-acid chain; its full sequence is Tyrosine-protein kinase TXK (527 aa).

Residues 58–81 (TQSNRGGVQPSKRKPLPPLPQEPP) form a disordered region. The SH3 domain occupies 82–142 (DERIQVKALY…PSNYVTENRL (61 aa)). Tyr91 carries the post-translational modification Phosphotyrosine; by autocatalysis. The 97-residue stretch at 150–246 (WYHKNITRNQ…GLISRLRYPI (97 aa)) folds into the SH2 domain. Positions 271–527 (LAFVKEIGSG…QVLTEIAETW (257 aa)) constitute a Protein kinase domain. Residues 277 to 285 (IGSGQFGVV) and Lys299 contribute to the ATP site. Asp390 functions as the Proton acceptor in the catalytic mechanism. Position 420 is a phosphotyrosine; by FYN and autocatalysis (Tyr420).

It belongs to the protein kinase superfamily. Tyr protein kinase family. TEC subfamily. As to quaternary structure, interacts with PARP1 and EEF1A1. Interacts with SH2D2A. Interacts with FYN. Post-translationally, phosphorylated at Tyr-420 by FYN. Autophosphorylation at Tyr-91 is critical for the activation of TXK, leading to the up-regulation of IFN-gamma gene transcription. The cysteine string at the N-terminus is palmitoylated and required for the proper subcellular location. In terms of tissue distribution, expressed in early thymocytes, T-cells and mast cells.

Its subcellular location is the cytoplasm. The protein localises to the nucleus. The protein resides in the cell membrane. The enzyme catalyses L-tyrosyl-[protein] + ATP = O-phospho-L-tyrosyl-[protein] + ADP + H(+). With respect to regulation, activated by phosphorylation by FYN. Non-receptor tyrosine kinase that plays a redundant role with ITK in regulation of the adaptive immune response. Regulates the development, function and differentiation of conventional T-cells and nonconventional NKT-cells. When antigen presenting cells (APC) activate T-cell receptor (TCR), a series of phosphorylation leads to the recruitment of TXK to the cell membrane, where it is phosphorylated at Tyr-420. Phosphorylation leads to TXK full activation. Also contributes to signaling from many receptors and participates in multiple downstream pathways, including regulation of the actin cytoskeleton. Like ITK, can phosphorylate PLCG1, leading to its localization in lipid rafts and activation, followed by subsequent cleavage of its substrates. In turn, the endoplasmic reticulum releases calcium in the cytoplasm and the nuclear activator of activated T-cells (NFAT) translocates into the nucleus to perform its transcriptional duty. Plays a role in the positive regulation of IFNG transcription in T-helper 1 cells as part of an IFNG promoter-binding complex with PARP1 and EEF1A1. Within the complex, phosphorylates both PARP1 and EEF1A1. Also phosphorylates key sites in LCP2 leading to the up-regulation of Th1 preferred cytokine IL-2. Phosphorylates 'Tyr-201' of CTLA4 which leads to the association of PI-3 kinase with the CTLA4 receptor. This is Tyrosine-protein kinase TXK (Txk) from Mus musculus (Mouse).